The following is a 3966-amino-acid chain: Histone-lysine N-methyltransferase 2A (3966 aa).

Disordered regions lie at residues 1–106 (MAHS…LLRV) and 130–231 (VFGE…GVKI). The Menin-binding motif (MBM) signature appears at 6–25 (RWRFPARPGTTGGGGGGGRR). Gly residues predominate over residues 15-29 (TTGGGGGGGRRGLGG). Positions 75 to 102 (GAAAASAASSSSASSSSSSSSSASSGPA) are enriched in low complexity. Positions 121-132 (GTNLRRFRAVFG) match the Integrase domain-binding motif 1 (IBM1) motif. Ser-134 and Ser-140 each carry phosphoserine; by CK2. The Integrase domain-binding motif 2 (IBM2) motif lies at 145–150 (QFLGFG). Position 151 is a phosphoserine (Ser-151). A DNA-binding region (a.T hook 1) is located at residues 167–178 (KASPRKPRGRPR). At Ser-195 the chain carries Phosphoserine. The span at 200 to 218 (SETKSADKIKKKDSKSIEK) shows a compositional bias: basic and acidic residues. The segment at residues 215-225 (SIEKKRGRPPT) is a DNA-binding region (a.T hook 2). An N6-acetyllysine modification is found at Lys-237. A DNA-binding region (a.T hook 3) is located at residues 299–307 (RRRGRPPST). Residues 322-343 (LEKPQKVRKDKEGTPPLTKEDK) form a disordered region. At Lys-371 the chain carries N6-acetyllysine. The segment at 440 to 590 (RLESTPNSRF…PWLMPPTIPL (151 aa)) is disordered. Over residues 450–489 (SATSCGSSEKSSAASQHSSQMSSDSSRSSSPSIDTTSDSQ) the composition is skewed to low complexity. A Phosphoserine modification is found at Ser-516. Low complexity predominate over residues 544-557 (LPTLQSAPQQQTSS). Positions 558-571 (SPPPPLLTPPPPLQ) are enriched in pro residues. At Lys-634 the chain carries N6-acetyllysine. Ser-678 carries the phosphoserine modification. Disordered regions lie at residues 711–943 (ESVT…ADVA), 963–1003 (RGNL…TSSI), 1034–1064 (IEKS…RGPR), and 1101–1161 (ILSS…CQVP). Low complexity-rich tracts occupy residues 717–730 (SNRT…SGVS) and 760–790 (LSTS…ASAL). 2 stretches are compositionally biased toward polar residues: residues 791–806 (NPTF…QSGE) and 817–830 (QTSA…SNSP). Thr-837 carries the phosphothreonine modification. Residues 843–887 (EKGRKKDTAPEELSKDRDADKSVEKDKSRERDREREKENKRESRK) show a composition bias toward basic and acidic residues. Ser-923 is subject to Phosphoserine. Residues 989 to 1003 (SAPSSSTVKHSTSSI) are compositionally biased toward low complexity. Residues 1040-1059 (LKQTDQPKAQGQESDSSETS) are compositionally biased toward polar residues. Residue Ser-1053 is modified to Phosphoserine. Positions 1101 to 1111 (ILSSMGNDDKS) are enriched in basic and acidic residues. The residue at position 1127 (Lys-1127) is an N6-acetyllysine. A CXXC-type zinc finger spans residues 1144-1192 (KKGRRSRRCGQCPGCQVPEDCGICTNCLDKPKFGGRNIKKQCCKMRKCQ). Zn(2+) contacts are provided by Cys-1152, Cys-1155, Cys-1158, Cys-1164, Cys-1167, Cys-1170, Cys-1186, and Cys-1191. The segment at 1196 to 1390 (WMPSKASLQK…PLSNGISSKQ (195 aa)) is disordered. Residues 1217–1229 (SKTTEKKESKEST) are compositionally biased toward basic and acidic residues. Residues 1230 to 1241 (AVKSPLEPAQKA) are compositionally biased toward low complexity. Lys-1232 is modified (N6-acetyllysine). Residues 1245-1270 (PREEPAPKKSSSEPPPRKPVEEKSEE) are compositionally biased toward basic and acidic residues. Positions 1369 to 1390 (KQENAGTLNILNPLSNGISSKQ) are enriched in polar residues. 3 PHD-type zinc fingers span residues 1430–1481 (RVVC…CKFC), 1478–1532 (CKFC…CVRC), and 1565–1629 (GNFC…CTER). The interval 1583–1599 (KMMQCGKCDRWVHSKCE) is interaction with histone H3K4me3. Positions 1637 to 1767 (ALEKELQASL…SFFIRQMERV (131 aa)) constitute a Bromo domain. Disordered stretches follow at residues 1665–1714 (YRQA…EGVK) and 1807–1870 (WQER…PGID). Pro residues predominate over residues 1828-1849 (APKPKGPGEPDSPTPLHPPTPP). Phosphoserine is present on Ser-1839. Thr-1847 carries the post-translational modification Phosphothreonine. Ser-1860 is subject to Phosphoserine. A C2HC pre-PHD-type zinc finger spans residues 1872 to 1912 (NRQCALCLMYGDDSANDAGRLLYIGQNEWTHVNCALWSAEV). The PHD-type 4 zinc-finger motif lies at 1933–1980 (LRCEFCQKPGATVGCCLTSCTSNYHFMCSRAKNCVFLDDKKVYCQRHR). Residues 2020–2076 (NIHMMIGSMTIDCLGILNDLSDCEDKLFPIGYQCSRVYWSTTDARKRCVYTCKIMEC) enclose the FYR N-terminal domain. At Ser-2100 the chain carries Phosphoserine. The disordered stretch occupies residues 2147–2174 (RTPSYSPTQRSPGCRPLPSAGSPTPTTH). Position 2148 is a phosphothreonine (Thr-2148). Phosphoserine occurs at positions 2152 and 2202. 4 disordered regions span residues 2214–2339 (VRTG…ATPG), 2371–2619 (RGQR…SARA), 2639–2673 (EDIP…SDED), and 2709–2759 (KISQ…DAGE). Over residues 2218 to 2230 (SAYSRSSVSSVPS) the composition is skewed to low complexity. 2 stretches are compositionally biased toward polar residues: residues 2250–2284 (LSSS…SSPS) and 2308–2320 (TSSS…SAHS). Composition is skewed to basic and acidic residues over residues 2411–2422 (ILHEHIGSSSRD) and 2430–2440 (SSKETCKEKHS). The segment covering 2498-2509 (GQSTQVEGSSKE) has biased composition (polar residues). Lys-2524 is covalently cross-linked (Glycyl lysine isopeptide (Lys-Gly) (interchain with G-Cter in SUMO2)). Over residues 2528 to 2537 (ENQSKNTQKE) the composition is skewed to polar residues. Phosphoserine is present on Ser-2560. A compositionally biased stretch (polar residues) spans 2569–2588 (PSPNNTLSQDPQSNNYQNLP). Position 2607 is a phosphoserine (Ser-2607). Residues 2609 to 2618 (KRRYPRRSAR) show a composition bias toward basic residues. Positions 2663-2673 (GADDLSTSDED) are enriched in acidic residues. Positions 2722–2737 (SDTSVTATSRKSSQIP) are enriched in polar residues. The segment covering 2740-2759 (NGKENGTENLKIDRPEDAGE) has biased composition (basic and acidic residues). Ser-2792 is modified (phosphoserine). A 9aaTAD motif is present at residues 2843–2851 (SDIMDFVLK). The residue at position 2951 (Ser-2951) is a Phosphoserine. Lys-2954 is subject to N6-acetyllysine. Disordered regions lie at residues 2958 to 3060 (ITEK…NAAV) and 3164 to 3239 (AAQS…PSNI). The segment covering 3012–3025 (HGNSQDLTRNSGTP) has biased composition (polar residues). Residue Ser-3032 is modified to Phosphoserine. The span at 3035 to 3060 (VPVQNQKYVPSSTDSPGPSQISNAAV) shows a compositional bias: polar residues. Low complexity predominate over residues 3167-3178 (SSFPPNISSPPS). Positions 3196 to 3212 (EANQRTDLTTTVATPSS) are enriched in polar residues. The span at 3214–3229 (LKKRPISRLHTRKNKK) shows a compositional bias: basic residues. A Phosphothreonine modification is found at Thr-3369. Lys-3459 carries the post-translational modification N6-acetyllysine. The interval 3462–3640 (TLTSQRDRDP…AMEEEESGFS (179 aa)) is disordered. Residues 3475–3487 (PGTQPSNFTQTAE) show a composition bias toward polar residues. Residues 3501–3528 (PSAKPASSASPGSSPSSGQQSGSSSVPG) show a composition bias toward low complexity. Ser-3510 and Ser-3523 each carry phosphoserine. Residues 3558 to 3570 (TSSEAHIPHRDTD) show a composition bias toward basic and acidic residues. One can recognise an FYR C-terminal domain in the interval 3663 to 3744 (KKGLVFEISS…KHCRNYKFRF (82 aa)). The WDR5 interaction motif (WIN) signature appears at 3759–3764 (GSARAE). Positions 3782 to 3805 (HRQPPEYNPNDEEEEEVQLKSARR) are disordered. One can recognise an SET domain in the interval 3826–3942 (EAVGVYRSPI…RGEELTYDYK (117 aa)). Residues His-3836 and Arg-3838 each contribute to the S-adenosyl-L-methionine site. The residue at position 3879 (Cys-3879) is an S-methylcysteine; by autocatalysis. S-adenosyl-L-methionine is bound by residues Tyr-3880 and 3903 to 3904 (NH). Positions 3906 and 3954 each coordinate Zn(2+). A Post-SET domain is found at 3950–3966 (NKLPCNCGAKKCRKFLN). Asn-3955 is an S-adenosyl-L-methionine binding site. Zn(2+) contacts are provided by Cys-3956 and Cys-3961.

Belongs to the class V-like SAM-binding methyltransferase superfamily. Histone-lysine methyltransferase family. TRX/MLL subfamily. As to quaternary structure, MLL cleavage product N320 heterodimerizes with MLL cleavage product C180 (via SET and FYRC domains). Component of some MLL1/MLL complex, at least composed of the core components KMT2A/MLL1, ASH2L, HCFC1/HCF1, HCFC2, WDR5, DPY30 and RBBP5, as well as the facultative components BACC1, CHD8, E2F6, HSP70, INO80C, KANSL1, LAS1L, MAX, MCRS1, MEN1, MGA, KAT8/MOF, PELP1, PHF20, PRP31, RING2, RUVB1/TIP49A, RUVB2/TIP49B, SENP3, TAF1, TAF4, TAF6, TAF7, TAF9 and TEX10. Interacts (via WIN motif) with WDR5; the interaction is direct. Interaction with WDR5 is required for stable interaction with ASH2L and RBBP5, and thereby also for optimal histone methyltransferase activity. Interacts with KAT8/MOF; the interaction is direct. Interacts with SBF1 and PPP1R15A. Interacts with ZNF335. Interacts with CLOCK and BMAL1 in a circadian manner. Interacts with PPIE; this results in decreased histone H3 methyltransferase activity. Interacts with CREBBP. Interacts with the WRAD complex composed of WDR5, RBBP5, ASH2L and DPY30. Interacts (via MBM motif) with MEN1. Interacts (via IBM motifs) with PSIP1 (via IBD domain) with moderate affinity whereas the KMT2A-MEN1 complex interacts with a greater affinity; MEN1 enhances interaction of KMT2A with PSIP1. Phosphorylation increases its affinity for PSIP1. Forms a complex with CREBBP and CREB1. Post-translationally, proteolytic cleavage by TASP1 generates MLL cleavage 3product N320 and MLL cleavage product C180, which reassemble through a non-covalent association. 2 cleavage sites exist, cleavage site 1 (CS1) and cleavage site 2 (CS2), to generate MLL cleavage products N320 and C180. CS2 is the major site. Phosphorylation increases its interaction with PSIP1. In terms of processing, auto-methylated at Cys-3879: auto-methylation is inhibited by the WRAD complex and unmodified histone H3.

It localises to the nucleus. The enzyme catalyses L-lysyl(4)-[histone H3] + S-adenosyl-L-methionine = N(6)-methyl-L-lysyl(4)-[histone H3] + S-adenosyl-L-homocysteine + H(+). It carries out the reaction N(6)-methyl-L-lysyl(4)-[histone H3] + S-adenosyl-L-methionine = N(6),N(6)-dimethyl-L-lysyl(4)-[histone H3] + S-adenosyl-L-homocysteine + H(+). The catalysed reaction is L-cysteinyl-[protein] + S-adenosyl-L-methionine = S-methyl-L-cysteinyl-[protein] + S-adenosyl-L-homocysteine + H(+). Its function is as follows. Histone methyltransferase that plays an essential role in early development and hematopoiesis. Catalytic subunit of the MLL1/MLL complex, a multiprotein complex that mediates both methylation of 'Lys-4' of histone H3 (H3K4me) complex and acetylation of 'Lys-16' of histone H4 (H4K16ac). Catalyzes methyl group transfer from S-adenosyl-L-methionine to the epsilon-amino group of 'Lys-4' of histone H3 (H3K4) via a non-processive mechanism. Part of chromatin remodeling machinery predominantly forms H3K4me1 and H3K4me2 methylation marks at active chromatin sites where transcription and DNA repair take place. Has weak methyltransferase activity by itself, and requires other component of the MLL1/MLL complex to obtain full methyltransferase activity. Has no activity toward histone H3 phosphorylated on 'Thr-3', less activity toward H3 dimethylated on 'Arg-8' or 'Lys-9', while it has higher activity toward H3 acetylated on 'Lys-9'. Binds to unmethylated CpG elements in the promoter of target genes and helps maintain them in the nonmethylated state. Required for transcriptional activation of HOXA9. Promotes PPP1R15A-induced apoptosis. Plays a critical role in the control of circadian gene expression and is essential for the transcriptional activation mediated by the CLOCK-BMAL1 heterodimer. Establishes a permissive chromatin state for circadian transcription by mediating a rhythmic methylation of 'Lys-4' of histone H3 (H3K4me) and this histone modification directs the circadian acetylation at H3K9 and H3K14 allowing the recruitment of CLOCK-BMAL1 to chromatin. Also has auto-methylation activity on Cys-3879 in absence of histone H3 substrate. The sequence is that of Histone-lysine N-methyltransferase 2A (Kmt2a) from Mus musculus (Mouse).